The primary structure comprises 138 residues: Cystatin-11 (138 aa).

Positions 1 to 26 (MMAEPWQALQLLLAILLTLMALPYQA) are cleaved as a signal peptide. 2 cysteine pairs are disulfide-bonded: Cys94–Cys102 and Cys115–Cys135. An N-linked (GlcNAc...) asparagine glycan is attached at Asn132.

Belongs to the cystatin family. As to expression, detected in the epithelium and lumen of the epididymis, and in sperm (at protein level).

Its subcellular location is the secreted. Functionally, has antibacterial activity against the Gram-negative bacteria E.coli. May play a role in sperm maturation and fertilization. This chain is Cystatin-11 (CST11), found in Homo sapiens (Human).